We begin with the raw amino-acid sequence, 314 residues long: Aspartate carbamoyltransferase catalytic subunit (314 aa).

Positions 58 and 59 each coordinate carbamoyl phosphate. Residue K86 coordinates L-aspartate. The carbamoyl phosphate site is built by R108, H136, and Q139. L-aspartate contacts are provided by R169 and R223. Positions 264 and 265 each coordinate carbamoyl phosphate.

This sequence belongs to the aspartate/ornithine carbamoyltransferase superfamily. ATCase family. As to quaternary structure, heterododecamer (2C3:3R2) of six catalytic PyrB chains organized as two trimers (C3), and six regulatory PyrI chains organized as three dimers (R2).

The enzyme catalyses carbamoyl phosphate + L-aspartate = N-carbamoyl-L-aspartate + phosphate + H(+). It participates in pyrimidine metabolism; UMP biosynthesis via de novo pathway; (S)-dihydroorotate from bicarbonate: step 2/3. Catalyzes the condensation of carbamoyl phosphate and aspartate to form carbamoyl aspartate and inorganic phosphate, the committed step in the de novo pyrimidine nucleotide biosynthesis pathway. The sequence is that of Aspartate carbamoyltransferase catalytic subunit from Roseobacter denitrificans (strain ATCC 33942 / OCh 114) (Erythrobacter sp. (strain OCh 114)).